A 374-amino-acid chain; its full sequence is Flagellar P-ring protein 1 (374 aa).

The first 29 residues, 1–29 (MPGVRWVRIVGVACAALSALALSVTSASA), serve as a signal peptide directing secretion.

It belongs to the FlgI family. The basal body constitutes a major portion of the flagellar organelle and consists of four rings (L,P,S, and M) mounted on a central rod.

The protein localises to the periplasm. The protein resides in the bacterial flagellum basal body. Its function is as follows. Assembles around the rod to form the L-ring and probably protects the motor/basal body from shearing forces during rotation. This Bradyrhizobium diazoefficiens (strain JCM 10833 / BCRC 13528 / IAM 13628 / NBRC 14792 / USDA 110) protein is Flagellar P-ring protein 1.